We begin with the raw amino-acid sequence, 249 residues long: 2,3-bisphosphoglycerate-dependent phosphoglycerate mutase (249 aa).

Residues 8-15 (RHGESTWN), 21-22 (TG), R60, 87-90 (ERHY), K98, 114-115 (RR), and 183-184 (GN) each bind substrate. The active-site Tele-phosphohistidine intermediate is the H9. E87 (proton donor/acceptor) is an active-site residue.

This sequence belongs to the phosphoglycerate mutase family. BPG-dependent PGAM subfamily. Homodimer.

It carries out the reaction (2R)-2-phosphoglycerate = (2R)-3-phosphoglycerate. Its pathway is carbohydrate degradation; glycolysis; pyruvate from D-glyceraldehyde 3-phosphate: step 3/5. Its function is as follows. Catalyzes the interconversion of 2-phosphoglycerate and 3-phosphoglycerate. The protein is 2,3-bisphosphoglycerate-dependent phosphoglycerate mutase of Aromatoleum aromaticum (strain DSM 19018 / LMG 30748 / EbN1) (Azoarcus sp. (strain EbN1)).